The sequence spans 658 residues: Endoglucanase 3 (658 aa).

Positions 1 to 23 (MQLKNFYPKMSVLGIATVMALTA) are cleaved as a signal peptide. Cys-24 is lipidated: N-palmitoyl cysteine. Cys-24 is lipidated: S-diacylglycerol cysteine. A propeptide spanning residues 24 to 265 (CGDENTQALF…TDSLFIDNIY (242 aa)) is cleaved from the precursor. The interval 42–83 (ENQVPVSSSDMSPTSSDAVIDPTSSSAAVVDPSTLPAEGPIT) is disordered. Residues 45 to 58 (VPVSSSDMSPTSSD) show a composition bias toward low complexity. Residues 87-277 (GLGTLVDDFE…DSSEVEKDQP (191 aa)) enclose the CBM11 domain. The Proton donor role is filled by Glu-448. Glu-597 serves as the catalytic Nucleophile.

It belongs to the glycosyl hydrolase 5 (cellulase A) family. As to quaternary structure, monomer. In terms of processing, may be a lipoprotein and may be glycosylated.

The protein localises to the membrane. It catalyses the reaction Endohydrolysis of (1-&gt;4)-beta-D-glucosidic linkages in cellulose, lichenin and cereal beta-D-glucans.. In terms of biological role, exhibits both endoglucanase and cellobiosidase activities. The protein is Endoglucanase 3 (cel-3) of Fibrobacter succinogenes (strain ATCC 19169 / S85).